We begin with the raw amino-acid sequence, 282 residues long: Phosphatidylglycerol--prolipoprotein diacylglyceryl transferase (282 aa).

A run of 3 helical transmembrane segments spans residues 19 to 39 (IGPF…VFGW), 58 to 78 (ISLV…ILGG), and 104 to 124 (GGMS…WFAY). Residue Arg-149 participates in a 1,2-diacyl-sn-glycero-3-phospho-(1'-sn-glycerol) binding. 3 consecutive transmembrane segments (helical) span residues 190-210 (AGME…LGAL), 214-234 (GMIL…GEHF), and 250-270 (MGML…VLAI).

It belongs to the Lgt family.

It localises to the cell inner membrane. The catalysed reaction is L-cysteinyl-[prolipoprotein] + a 1,2-diacyl-sn-glycero-3-phospho-(1'-sn-glycerol) = an S-1,2-diacyl-sn-glyceryl-L-cysteinyl-[prolipoprotein] + sn-glycerol 1-phosphate + H(+). It participates in protein modification; lipoprotein biosynthesis (diacylglyceryl transfer). Its function is as follows. Catalyzes the transfer of the diacylglyceryl group from phosphatidylglycerol to the sulfhydryl group of the N-terminal cysteine of a prolipoprotein, the first step in the formation of mature lipoproteins. The polypeptide is Phosphatidylglycerol--prolipoprotein diacylglyceryl transferase (Bradyrhizobium diazoefficiens (strain JCM 10833 / BCRC 13528 / IAM 13628 / NBRC 14792 / USDA 110)).